The chain runs to 544 residues: Lysophosphatidylcholine acyltransferase 2 (544 aa).

The Cytoplasmic segment spans residues 1-58 (MNRCAEAAAVAATVPGSGVGDAGLRPPMVPRQASFFPPPVPNPFVQQTTISASRRLQM). A helical; Signal-anchor for type II membrane protein membrane pass occupies residues 59–79 (FLLGIILLPVRALLVGIILLL). Residues 80 to 544 (AWPFAVISTA…EEGTSDKKVD (465 aa)) are Lumenal-facing. The HXXXXD motif signature appears at 146 to 151 (HSTFFD). Positions 220 to 223 (EGTC) match the EGTC motif motif. 2 consecutive EF-hand domains span residues 391-426 (PVSD…LCNP) and 428-463 (NTEE…SLGV). Residues Asp404, Asn406, Asp408, Ser410, Glu415, Asp441, Asp443, Asp445, Tyr447, and Glu452 each coordinate Ca(2+). A compositionally biased stretch (polar residues) spans 520-532 (TAPSVASNKVSPE). The segment at 520-544 (TAPSVASNKVSPESQEEGTSDKKVD) is disordered.

The protein belongs to the 1-acyl-sn-glycerol-3-phosphate acyltransferase family. In terms of tissue distribution, highest expression is found in resident macrophages and casein-induced neutrophils followed by skin, colon, spleen and thioglycollate-induced macrophages. Detected in erythroleukemic cells but not in reticulocytes.

It is found in the endoplasmic reticulum membrane. The protein resides in the golgi apparatus membrane. Its subcellular location is the cell membrane. The protein localises to the lipid droplet. It carries out the reaction a 1-acyl-sn-glycero-3-phosphocholine + an acyl-CoA = a 1,2-diacyl-sn-glycero-3-phosphocholine + CoA. It catalyses the reaction a 1-O-alkyl-sn-glycero-3-phosphocholine + acetyl-CoA = a 1-O-alkyl-2-acetyl-sn-glycero-3-phosphocholine + CoA. The catalysed reaction is a 1-acyl-sn-glycero-3-phosphate + an acyl-CoA = a 1,2-diacyl-sn-glycero-3-phosphate + CoA. The enzyme catalyses a 1-O-(1Z-alkenyl)-sn-glycero-3-phosphocholine + an acyl-CoA = a 1-O-(1Z-alkenyl)-2-acyl-sn-glycero-3-phosphocholine + CoA. It carries out the reaction 1-O-octadecyl-sn-glycero-3-phosphocholine + acetyl-CoA = 1-O-octadecyl-2-acetyl-sn-glycero-3-phosphocholine + CoA. It catalyses the reaction 1-hexadecanoyl-sn-glycero-3-phosphocholine + acetyl-CoA = 1-hexadecanoyl-2-acetyl-sn-glycero-3-phosphocholine + CoA. The catalysed reaction is 1-octadecanoyl-sn-glycero-3-phosphocholine + acetyl-CoA = 1-octadecanoyl-2-acetyl-sn-glycero-3-phosphocholine + CoA. The enzyme catalyses a 1-O-(1Z-alkenyl)-sn-glycero-3-phosphocholine + acetyl-CoA = 1-O-(1Z)-alkenyl-2-acetyl-sn-glycero-3-phosphocholine + CoA. It carries out the reaction 1-O-hexadecyl-sn-glycero-3-phosphocholine + acetyl-CoA = 1-O-hexadecyl-2-acetyl-sn-glycero-3-phosphocholine + CoA. It catalyses the reaction 1-O-octadecyl-sn-glycero-3-phosphocholine + (5Z,8Z,11Z,14Z)-eicosatetraenoyl-CoA = 1-O-octadecyl-2-(5Z,8Z,11Z,14Z)-eicosatetraenoyl-sn-glycero-3-phosphocholine + CoA. The catalysed reaction is 1-hexadecanoyl-sn-glycero-3-phosphate + (9Z)-octadecenoyl-CoA = 1-hexadecanoyl-2-(9Z-octadecenoyl)-sn-glycero-3-phosphate + CoA. The enzyme catalyses 1-(9Z-octadecenoyl)-sn-glycero-3-phosphate + (9Z)-octadecenoyl-CoA = 1,2-di-(9Z-octadecenoyl)-sn-glycero-3-phosphate + CoA. It carries out the reaction 1-(9Z-octadecenoyl)-sn-glycero-3-phosphate + hexadecanoyl-CoA = 1-(9Z)-octadecenoyl-2-hexadecanoyl-sn-glycero-3-phosphate + CoA. It catalyses the reaction 1-heptadecanoyl-sn-glycero-3-phosphate + (9Z)-octadecenoyl-CoA = 1-heptadecanoyl-2-(9Z)-octadecenoyl-sn-glycero-3-phosphate + CoA. The catalysed reaction is 1-octadecanoyl-sn-glycero-3-phosphate + (9Z)-octadecenoyl-CoA = 1-octadecanoyl-2-(9Z-octadecenoyl)-sn-glycero-3-phosphate + CoA. The enzyme catalyses heptadecanoyl-CoA + 1-(9Z-octadecenoyl)-sn-glycero-3-phosphate = 1-(9Z)-octadecenoyl-2-heptadecanoyl-sn-glycero-3-phosphate + CoA. It carries out the reaction 1-(9Z-octadecenoyl)-sn-glycero-3-phosphate + (9Z,12Z)-octadecadienoyl-CoA = 1-(9Z)-octadecenoyl-2-(9Z,12Z)-octadecadienoyl-sn-glycero-3-phosphate + CoA. It catalyses the reaction 1-(9Z-octadecenoyl)-sn-glycero-3-phosphate + tetradecanoyl-CoA = 1-(9Z)-octadecenoyl-2-tetradecanoyl-sn-glycero-3-phosphate + CoA. The catalysed reaction is pentadecanoyl-CoA + 1-(9Z-octadecenoyl)-sn-glycero-3-phosphate = 1-(9Z)-octadecenoyl-2-pentadecanoyl-sn-glycero-3-phosphate + CoA. The enzyme catalyses nonadecanoyl-CoA + 1-(9Z-octadecenoyl)-sn-glycero-3-phosphate = 1-(9Z)-octadecenoyl-2-nonadecanoyl-sn-glycero-3-phosphate + CoA. It carries out the reaction 1-hexadecanoyl-sn-glycero-3-phosphocholine + (9Z)-octadecenoyl-CoA = 1-hexadecanoyl-2-(9Z-octadecenoyl)-sn-glycero-3-phosphocholine + CoA. It functions in the pathway lipid metabolism; phospholipid metabolism. Its activity is regulated as follows. Acetyltransferase activity is increased following acute inflammatory stimulation by lipopolysaccharide (LPS). Acyltransferase activity is unchanged. Exhibits both acyltransferase and acetyltransferase activities. Activity is calcium-dependent. Catalyzes the conversion of lysophosphatidylcholine (1-acyl-sn-glycero-3-phosphocholine or LPC) into phosphatidylcholine (1,2-diacyl-sn-glycero-3-phosphocholine or PC). Catalyzes the conversion 1-acyl-sn-glycerol-3-phosphate (lysophosphatidic acid or LPA) into 1,2-diacyl-sn-glycerol-3-phosphate (phosphatidic acid or PA) by incorporating an acyl moiety at the sn-2 position of the glycerol backbone. Involved in platelet-activating factor (PAF) biosynthesis by catalyzing the conversion of the PAF precursor, 1-O-alkyl-sn-glycero-3-phosphocholine (lyso-PAF) into 1-O-alkyl-2-acetyl-sn-glycero-3-phosphocholine (PAF). Also converts lyso-PAF to 1-O-alkyl-2-acyl-sn-glycero-3-phosphocholine (PC), a major component of cell membranes and a PAF precursor. Under resting conditions, acyltransferase activity is preferred. Upon acute inflammatory stimulus, acetyltransferase activity is enhanced and PAF synthesis increases. Involved in the regulation of lipid droplet number and size. The chain is Lysophosphatidylcholine acyltransferase 2 (Lpcat2) from Mus musculus (Mouse).